We begin with the raw amino-acid sequence, 63 residues long: Alpha-toxin CsE5 (63 aa).

Residues 2 to 61 (KDGYPVDSGNCKYECLKDDYCNDLCLERKADKGYCYWGKVSCYCYGLPDNSPTKTSGKCN) enclose the LCN-type CS-alpha/beta domain. 4 disulfide bridges follow: Cys12-Cys60, Cys16-Cys36, Cys22-Cys43, and Cys26-Cys45.

This sequence belongs to the long (4 C-C) scorpion toxin superfamily. Sodium channel inhibitor family. Alpha subfamily. Expressed by the venom gland.

It is found in the secreted. In terms of biological role, alpha toxins bind voltage-independently at site-3 of sodium channels (Nav) and inhibit the inactivation of the activated channels, thereby blocking neuronal transmission. This is Alpha-toxin CsE5 from Centruroides sculpturatus (Arizona bark scorpion).